A 123-amino-acid polypeptide reads, in one-letter code: T-complex protein 1 subunit alpha (123 aa).

Gly-68 is a binding site for ADP.

Belongs to the TCP-1 chaperonin family. Component of the chaperonin-containing T-complex (TRiC), a hexadecamer composed of two identical back-to-back stacked rings enclosing a protein folding chamber. Each ring is made up of eight different subunits: TCP1/CCT1, CCT2, CCT3, CCT4, CCT5, CCT6A/CCT6, CCT7, CCT8. Interacts with PACRG. Interacts with GBA1. Interacts with DLEC1.

It is found in the cytoplasm. The protein localises to the cytosol. It localises to the cytoskeleton. The protein resides in the microtubule organizing center. Its subcellular location is the centrosome. It carries out the reaction ATP + H2O = ADP + phosphate + H(+). Component of the chaperonin-containing T-complex (TRiC), a molecular chaperone complex that assists the folding of actin, tubulin and other proteins upon ATP hydrolysis. The TRiC complex mediates the folding of WRAP53/TCAB1, thereby regulating telomere maintenance. As part of the TRiC complex may play a role in the assembly of BBSome, a complex involved in ciliogenesis regulating transports vesicles to the cilia. The protein is T-complex protein 1 subunit alpha of Mesocricetus auratus (Golden hamster).